The chain runs to 386 residues: GTPase Obg (386 aa).

The Obg domain occupies 1–159 (MKFVDEASIL…RELLLELMLL (159 aa)). Residues 127 to 147 (NTRFKSSVNRTPRQKTNGTPG) form a disordered region. Residues 129–145 (RFKSSVNRTPRQKTNGT) are compositionally biased toward polar residues. Residues 160 to 333 (ADVGMLGMPN…LCWDVMTFII (174 aa)) enclose the OBG-type G domain. GTP is bound by residues 166-173 (GMPNAGKS), 191-195 (FTTLV), 213-216 (DIPG), 283-286 (NKID), and 314-316 (SAA). Positions 173 and 193 each coordinate Mg(2+).

It belongs to the TRAFAC class OBG-HflX-like GTPase superfamily. OBG GTPase family. As to quaternary structure, monomer. It depends on Mg(2+) as a cofactor.

The protein localises to the cytoplasm. In terms of biological role, an essential GTPase which binds GTP, GDP and possibly (p)ppGpp with moderate affinity, with high nucleotide exchange rates and a fairly low GTP hydrolysis rate. Plays a role in control of the cell cycle, stress response, ribosome biogenesis and in those bacteria that undergo differentiation, in morphogenesis control. This Escherichia coli (strain UTI89 / UPEC) protein is GTPase Obg.